The chain runs to 249 residues: tRNA (guanine-N(1)-)-methyltransferase (249 aa).

Residues G113 and 133–138 each bind S-adenosyl-L-methionine; that span reads LGDFVL.

It belongs to the RNA methyltransferase TrmD family. Homodimer.

It localises to the cytoplasm. The enzyme catalyses guanosine(37) in tRNA + S-adenosyl-L-methionine = N(1)-methylguanosine(37) in tRNA + S-adenosyl-L-homocysteine + H(+). Specifically methylates guanosine-37 in various tRNAs. The polypeptide is tRNA (guanine-N(1)-)-methyltransferase (Leptothrix cholodnii (strain ATCC 51168 / LMG 8142 / SP-6) (Leptothrix discophora (strain SP-6))).